A 780-amino-acid polypeptide reads, in one-letter code: Protein phosphatase 1 regulatory subunit 21 (780 aa).

Coiled coils occupy residues 1-209 (MASA…NLHE) and 556-605 (ESRE…DRLR). Positions 84-104 (EPRGKKNKKSGESSSQLSQEQ) are disordered. Positions 95-104 (ESSSQLSQEQ) are enriched in low complexity. Position 652 is a phosphothreonine (Thr652). Residues 694–742 (AECRALSKRLALAEKSKETLTEEMRLASQNISRLQDELMTTKRSYEDQL) adopt a coiled-coil conformation.

As to quaternary structure, component of the FERRY complex, composed of five subunits: TBCK, PPP1R21, FERRY3, CRYZL1 and GATAD1, with a ratio of 1:2:1:2:4 respectively. PPP1R21 serves as a binding hub connecting all five complex subunits to mediate the binding to specific mitochondrial mRNAs. Interacts with the GTP-bound form of RAB5A (via its C-terminal region); linking the mRNP complex onto trafficking endosomes for active mRNA transport. Interacts with PPP1CA. As to expression, expressed at 16 dpc in the cortex (at protein level).

It localises to the early endosome. Component of the FERRY complex (Five-subunit Endosomal Rab5 and RNA/ribosome intermediary). The FERRY complex directly interacts with mRNAs and RAB5A, and functions as a RAB5A effector involved in the localization and the distribution of specific mRNAs most likely by mediating their endosomal transport. The complex recruits mRNAs and ribosomes to early endosomes through direct mRNA-interaction. In the complex, PPP1R21 serves as a binding hub connecting all five complex subunits and mediating the binding to mRNA and early endosomes via RAB5A. Putative regulator of protein phosphatase 1 (PP1) activity. May play a role in the endosomal sorting process or in endosome maturation pathway. This Mus musculus (Mouse) protein is Protein phosphatase 1 regulatory subunit 21 (Ppp1r21).